The chain runs to 533 residues: Solute carrier family 2, facilitated glucose transporter member 2 (533 aa).

At 1 to 17 (MDGKSKMQAEKHLTGTL) the chain is on the cytoplasmic side. A helical transmembrane segment spans residues 18-38 (VLSVFTAVLGFFQYGYSLGVI). Topologically, residues 39-110 (NAPQKVIEAH…SPHILTMYWS (72 aa)) are extracellular. Asn64 and Asn69 each carry an N-linked (GlcNAc...) asparagine glycan. Residues 111 to 131 (LSVSMFAVGGMVSSFTVGWIG) traverse the membrane as a helical segment. Residues 132-136 (DRLGR) are Cytoplasmic-facing. A helical membrane pass occupies residues 137-157 (VKAMLVVNVLSIAGNLLMGLA). Topologically, residues 158–163 (KMGPSH) are extracellular. Residues 164-184 (ILIIAGRAITGLYCGLSSGLV) traverse the membrane as a helical segment. At 185 to 199 (PMYVSEVSPTALRGA) the chain is on the cytoplasmic side. Residues 200–220 (LGTLHQLAIVTGILISQVLGL) form a helical membrane-spanning segment. Gln205 lines the D-glucose pocket. The Extracellular segment spans residues 221-229 (DFLLGNDEL). Residues 230 to 250 (WPLLLGLSGVAALLQFFLLLL) form a helical membrane-spanning segment. The Cytoplasmic segment spans residues 251-315 (CPESPRYLYI…LFSSSKYRQA (65 aa)). Residues 316-336 (VIVALMVQISQQFSGINAIFY) form a helical membrane-spanning segment. D-glucose-binding positions include 326 to 327 (QQ) and Asn332. Topologically, residues 337–350 (YSTNIFQRAGVGQP) are extracellular. A helical transmembrane segment spans residues 351–371 (VYATIGVGVVNTVFTVISVFL). Asn361 lines the D-glucose pocket. Residues 372–379 (VEKAGRRS) are Cytoplasmic-facing. The chain crosses the membrane as a helical span at residues 380-400 (LFLAGLMGMLISAVAMTVGLV). The Extracellular portion of the chain corresponds to 401 to 413 (LLSQFAWMSYVSM). A helical transmembrane segment spans residues 414-434 (VAIFLFVIFFEVGPGPIPWFI). The D-glucose site is built by Glu424 and Trp432. At 435 to 445 (VAELFSQGPRP) the chain is on the cytoplasmic side. Residues 446-466 (AAIAVAGFCNWACNFIVGMCF) traverse the membrane as a helical segment. Residues 467-471 (QYIAD) are Extracellular-facing. Residues 472–492 (LCGPYVFVVFAVLLLVFFLFA) form a helical membrane-spanning segment. Residues 493–533 (YLKVPETKGKSFEEIAAAFRRKKLPAKSMTELEDLRGGEEA) lie on the Cytoplasmic side of the membrane.

This sequence belongs to the major facilitator superfamily. Sugar transporter (TC 2.A.1.1) family. Glucose transporter subfamily.

It is found in the cell membrane. The enzyme catalyses D-glucose(out) = D-glucose(in). The catalysed reaction is D-fructose(out) = D-fructose(in). It catalyses the reaction L-dehydroascorbate(out) = L-dehydroascorbate(in). It carries out the reaction D-galactose(in) = D-galactose(out). With respect to regulation, D-glucose and maltose competitively inhibit fructose transport. D-glucose, D-fructose and maltose inhibit deoxyglucose transport. Its function is as follows. Facilitative hexose transporter that mediates the transport of glucose, fructose and galactose. Likely mediates the bidirectional transfer of glucose across the plasma membrane of hepatocytes and is responsible for uptake of glucose by the beta cells. In Gallus gallus (Chicken), this protein is Solute carrier family 2, facilitated glucose transporter member 2.